Here is a 362-residue protein sequence, read N- to C-terminus: 3-dehydroquinate synthase (362 aa).

NAD(+) contacts are provided by residues 70–75 (DGEKYK), 104–108 (GVIGD), 128–129 (TT), Lys141, and Lys150. The Zn(2+) site is built by Glu183, His246, and His263.

The protein belongs to the sugar phosphate cyclases superfamily. Dehydroquinate synthase family. Requires Co(2+) as cofactor. The cofactor is Zn(2+). It depends on NAD(+) as a cofactor.

It localises to the cytoplasm. The catalysed reaction is 7-phospho-2-dehydro-3-deoxy-D-arabino-heptonate = 3-dehydroquinate + phosphate. Its pathway is metabolic intermediate biosynthesis; chorismate biosynthesis; chorismate from D-erythrose 4-phosphate and phosphoenolpyruvate: step 2/7. Its function is as follows. Catalyzes the conversion of 3-deoxy-D-arabino-heptulosonate 7-phosphate (DAHP) to dehydroquinate (DHQ). This chain is 3-dehydroquinate synthase, found in Acinetobacter baylyi (strain ATCC 33305 / BD413 / ADP1).